Here is a 52-residue protein sequence, read N- to C-terminus: Protein YabQ (52 aa).

In terms of biological role, identified as a multicopy suppressor of the slow growth phenotype of an rsgA (yjeQ) deletion mutant. This is Protein YabQ (yabQ) from Escherichia coli (strain K12).